The sequence spans 253 residues: uncharacterized protein (253 aa).

2 consecutive C2HC LYAR-type zinc fingers follow at residues 1–26 (MVFF…FQCR) and 27–51 (NTTF…VKCI). Zn(2+) is bound by residues Cys6, Cys9, His21, Cys25, Cys32, Cys35, His47, and Cys50. Residues 136 to 171 (AAEADKMREEAIRKQEETQKMEKAQKEAAAAAKKET) are a coiled coil.

It localises to the nucleus. This is an uncharacterized protein from Caenorhabditis elegans.